The following is an 88-amino-acid chain: Probable Fe(2+)-trafficking protein (88 aa).

It belongs to the Fe(2+)-trafficking protein family.

Could be a mediator in iron transactions between iron acquisition and iron-requiring processes, such as synthesis and/or repair of Fe-S clusters in biosynthetic enzymes. This chain is Probable Fe(2+)-trafficking protein, found in Alkalilimnicola ehrlichii (strain ATCC BAA-1101 / DSM 17681 / MLHE-1).